Reading from the N-terminus, the 122-residue chain is Large ribosomal subunit protein uL14 (122 aa).

Belongs to the universal ribosomal protein uL14 family. In terms of assembly, part of the 50S ribosomal subunit. Forms a cluster with proteins L3 and L19. In the 70S ribosome, L14 and L19 interact and together make contacts with the 16S rRNA in bridges B5 and B8.

Its function is as follows. Binds to 23S rRNA. Forms part of two intersubunit bridges in the 70S ribosome. This chain is Large ribosomal subunit protein uL14, found in Frankia alni (strain DSM 45986 / CECT 9034 / ACN14a).